A 68-amino-acid chain; its full sequence is MKTQFAILLIALVLFQMFSQSEAFLGGLWKAMSNLLGKRGLNELDDLDELFDGEISQADIDFLKELMS.

An N-terminal signal peptide occupies residues 1–23 (MKTQFAILLIALVLFQMFSQSEA). Position 36 is a leucine amide (L36). A propeptide spanning residues 40–68 (GLNELDDLDELFDGEISQADIDFLKELMS) is cleaved from the precursor.

Belongs to the non-disulfide-bridged peptide (NDBP) superfamily. Short antimicrobial peptide (group 4) family. As to expression, expressed by the venom gland.

The protein localises to the secreted. The protein resides in the target cell membrane. Amphipathic peptide that has antibacterial activities. The sequence is that of Cytotoxic linear peptide from Pandinus cavimanus (Tanzanian red clawed scorpion).